The sequence spans 447 residues: Zinc finger protein ZIC 1 (447 aa).

A C2H2-type 1; atypical zinc finger spans residues 225 to 260 (LICKWIEPEQLANPKKSCNKTFSTMHELVTHVTVEH). A C2H2-type 2; atypical zinc finger spans residues 269–296 (HICFWEECPREGKPFKAKYKLVNHIRVH). C2H2-type zinc fingers lie at residues 302-326 (FPCP…KRTH), 332-356 (FKCE…MHVH), and 362-384 (YLCK…MKVH). Residues 375 to 431 (SSLRKHMKVHESSSQGSQPSPAASSGYESSTPPTIVSPSTDNPTTSSLSPSSSAVHH) form a disordered region. A compositionally biased stretch (low complexity) spans 386–427 (SSSQGSQPSPAASSGYESSTPPTIVSPSTDNPTTSSLSPSSS).

The protein belongs to the GLI C2H2-type zinc-finger protein family. Interacts (via the C2H2-type domains 3, 4 and 5) with MDFIC (via the C2H2-type domains 3, 4 and 5). Interacts with GLI1; the interaction enhances transcription activation. Interacts with GLI2. Interacts with GLI3; the interaction enhances transcription activation. In terms of tissue distribution, CNS. A high level expression is seen in the cerebellum. Detected in the nuclei of the cerebellar granule cell lineage from the progenitor cells of the external germinal layer to the postmigrated cells of the internal granular layer. Detected in medulloblastoma (26/29 cases), but not present in all other tumors examined.

The protein resides in the nucleus. Its subcellular location is the cytoplasm. Acts as a transcriptional activator. Involved in neurogenesis. Plays important roles in the early stage of organogenesis of the CNS, as well as during dorsal spinal cord development and maturation of the cerebellum. Involved in the spatial distribution of mossy fiber (MF) neurons within the pontine gray nucleus (PGN). Plays a role in the regulation of MF axon pathway choice. Promotes MF migration towards ipsilaterally-located cerebellar territories. May have a role in shear flow mechanotransduction in osteocytes. Retains nuclear GLI1 and GLI3 in the cytoplasm. Binds to the minimal GLI-consensus sequence 5'-TGGGTGGTC-3'. The protein is Zinc finger protein ZIC 1 (ZIC1) of Homo sapiens (Human).